The sequence spans 389 residues: MQQHSSKTAYVYSDKLLQYRFHDQHPFNQMRLKLTTELLLNANLLSPEQIVQPRIATDDELMLIHKYDYVEAIKHASHGIISEDEAKKYGLNDEENGQFKHMHRHSATIVGGALTLADLIMSGKVLNGCHLGGGLHHAQPGRASGFCIYNDIAITAQYLAKEYNQRVLIIDTDAHHGDGTQWSFYADNHVTTYSIHETGKFLFPGSGHYTERGEDIGYGHTVNVPLEPYTEDASFLECFKLTVEPVVKSFKPDIILSVNGVDIHYRDPLTHLNCTLHSLYEIPYFVKYLADSYTNGKVIMFGGGGYNIWRVVPRAWSHVFLSLIDQPIQSGYLPLEWINKWKHYSSELLPKRWEDRLNDYTYVPRTKEISEKNKKLALHIASWYESTRQ.

This sequence belongs to the histone deacetylase family.

The protein operates within ketone degradation; acetoin degradation. Role in growth on acetoin or butanediol. Involved in the breakdown of these compounds used as a carbon source. This Staphylococcus aureus (strain COL) protein is Acetoin utilization protein AcuC (acuC).